Here is a 463-residue protein sequence, read N- to C-terminus: GTPase Der (463 aa).

EngA-type G domains lie at 2–164 and 198–369; these read KKII…PKSK and IKIG…KNYT. Residues 8–15, 55–59, 116–119, 204–211, 251–255, and 315–318 contribute to the GTP site; these read GRPNVGKS, DSGGL, NKVD, GRVNVGKS, DTAGI, and NKWD. The KH-like domain occupies 370–454; sequence QKMKTSRLNE…PVILIPKNRS (85 aa).

It belongs to the TRAFAC class TrmE-Era-EngA-EngB-Septin-like GTPase superfamily. EngA (Der) GTPase family. In terms of assembly, associates with the 50S ribosomal subunit.

Functionally, GTPase that plays an essential role in the late steps of ribosome biogenesis. This chain is GTPase Der, found in Campylobacter fetus subsp. fetus (strain 82-40).